Reading from the N-terminus, the 308-residue chain is ATP synthase gamma chain (308 aa).

It belongs to the ATPase gamma chain family. As to quaternary structure, F-type ATPases have 2 components, CF(1) - the catalytic core - and CF(0) - the membrane proton channel. CF(1) has five subunits: alpha(3), beta(3), gamma(1), delta(1), epsilon(1). CF(0) has three main subunits: a, b and c.

It localises to the cell inner membrane. Produces ATP from ADP in the presence of a proton gradient across the membrane. The gamma chain is believed to be important in regulating ATPase activity and the flow of protons through the CF(0) complex. This is ATP synthase gamma chain from Bartonella tribocorum (strain CIP 105476 / IBS 506).